A 2211-amino-acid chain; its full sequence is Norsolorinic acid synthase stcA (2211 aa).

The interval 11 to 251 is starter unit:ACP transacylase (SAT) domain; the sequence is FLFGDQTYDF…REIPIYVPAH (241 aa). The disordered stretch occupies residues 358-378; it reads PAEPPTSINKTPERYSHRPGS. Residues 368–378 are compositionally biased toward basic and acidic residues; sequence TPERYSHRPGS. A Ketosynthase family 3 (KS3) domain is found at 380-812; sequence RGKLAIVSMS…GGNTAVLVED (433 aa). Residues cysteine 552, histidine 687, and histidine 730 each act as for beta-ketoacyl synthase activity in the active site. The tract at residues 912–1201 is malonyl-CoA:ACP transacylase (MAT) domain; sequence IACSGQGSQY…MAGMIKTTLD (290 aa). Serine 1004 functions as the For acyl/malonyl transferase activity in the catalytic mechanism. Residues 1289–1316 are disordered; it reads TATSDYQLPSDEQVAAKRPSKQDESKEA. An N-terminal hotdog fold region spans residues 1327–1468; sequence HRVVEEKTEP…CTVRFTSEAQ (142 aa). The 317-residue stretch at 1327–1643 folds into the PKS/mFAS DH domain; the sequence is HRVVEEKTEP…LRRVPRRGLR (317 aa). A product template (PT) domain region spans residues 1340–1643; the sequence is TLVVETDISR…LRRVPRRGLR (304 aa). Histidine 1359 serves as the catalytic Proton acceptor; for dehydratase activity. The interval 1495–1643 is C-terminal hotdog fold; that stretch reads FIRYTTKSGY…LRRVPRRGLR (149 aa). Aspartate 1555 acts as the Proton donor; for dehydratase activity in catalysis. The segment at 1655 to 1706 is disordered; sequence RLHGNQQAVKTQAPQRAALKQKPQSSPTQPHASKVAYSRSATSPTAGKPVVA. 2 stretches are compositionally biased toward polar residues: residues 1658–1668 and 1676–1685; these read GNQQAVKTQAP and KPQSSPTQPH. 2 Carrier domains span residues 1712–1791 and 1839–1915; these read REGD…SGSA and DELF…GTTS. O-(pantetheine 4'-phosphoryl)serine is present on residues serine 1749 and serine 1873. Over residues 1912 to 1926 the composition is skewed to low complexity; that stretch reads GTTSGSTTGSSGSGS. Positions 1912-1947 are disordered; sequence GTTSGSTTGSSGSGSSEDETDSIPSTPEEYTTADTR. Residues 1934–1945 are compositionally biased toward polar residues; that stretch reads IPSTPEEYTTAD. Positions 1969-2205 are thioesterase/Claisen cyclase (TE/CLC) domain; that stretch reads ILFMLPDGGG…KEHVYLVREL (237 aa). Residue serine 2039 is the For thioesterase activity of the active site.

Pantetheine 4'-phosphate serves as cofactor.

It carries out the reaction hexanoyl-[ACP] + 7 malonyl-CoA + 6 H(+) = noranthrone + holo-[ACP] + 7 CO2 + 7 CoA + 2 H2O. Its pathway is mycotoxin biosynthesis; sterigmatocystin biosynthesis. Functionally, non-reducing polyketide synthase; part of the gene cluster that mediates the biosynthesis of sterigmatocystin (ST), a polyketide-derived furanocoumarin which is part of the most toxic and carcinogenic compounds among the known mycotoxins. The first step in the biosynthesis of sterigmatocystin is the production of hexanoate by the fatty acid synthase (FAS) units stcJ and stcK. The polyketide backbone is assembled by the non-reducing polyketide synthase stcA by condensation of the starter hexanoyl-CoA and 7 malonyl-CoA extender units followed by cyclization and release of norsolorinic acid. Norsolorinic acid is the first stable intermediate in the biosynthesis of sterigmatocystin and is converted into averantin (AVN) by the ketoreductase stcE which reduces the hexanoate ketone to an alcohol. Averantin is then oxidized into 5'-hydroxyaverantin (HAVN) by the cytochrome P450 monooxygenase stcF. 5'-hydroxyaverantin is further converted to 5'-oxyaverantin (OAVN) by the 5'-hydroxyaverantin dehydrogenase stcG. The next step is the conversion of OAVN into averufin (AVF) which is catalyzed by a yet to be identified enzyme. The cytochrome P450 monooxygenase stcB and the flavin-binding monooxygenase stcW are both required for the conversion of averufin to 1-hydroxyversicolorone. The esterase stcI probably catalyzes the formation of versiconal hemiacetal acetate from 1-hydroxyversicolorone. The oxydoreductase stcN then probably catalyzes the biosynthetic step from versiconal to versicolorin B (VERB). The next step is performed by the versicolorin B desaturase stcL to produce versicolorin A (VERA). The ketoreductase stcU and the cytochrome P450 monooxygenase stcS are involved in the conversion of versicolorin A to demethylsterigmatocystin. The Baeyer-Villiger oxidas stcQ and the reductase stcR might be involved in the biosynthetic step from versicolorin A to demethylsterigmatocystin. The final step in the biosynthesis of sterigmatocystin is the methylation of demethylsterigmatocystin catalyzed by the methyltransferase stcP. The chain is Norsolorinic acid synthase stcA from Emericella nidulans (strain FGSC A4 / ATCC 38163 / CBS 112.46 / NRRL 194 / M139) (Aspergillus nidulans).